The following is a 122-amino-acid chain: Urease subunit beta (122 aa).

Residues 92–122 are disordered; the sequence is GLRPEYAGELDGRGHEPTAPNYGEKGQGHFE.

The protein belongs to the urease beta subunit family. Heterotrimer of UreA (gamma), UreB (beta) and UreC (alpha) subunits. Three heterotrimers associate to form the active enzyme.

Its subcellular location is the cytoplasm. The enzyme catalyses urea + 2 H2O + H(+) = hydrogencarbonate + 2 NH4(+). It participates in nitrogen metabolism; urea degradation; CO(2) and NH(3) from urea (urease route): step 1/1. This Saccharopolyspora erythraea (strain ATCC 11635 / DSM 40517 / JCM 4748 / NBRC 13426 / NCIMB 8594 / NRRL 2338) protein is Urease subunit beta.